Reading from the N-terminus, the 248-residue chain is Protein STPG4 (248 aa).

In terms of assembly, interacts with histone H3. Interacts with histone H4.

It localises to the cytoplasm. It is found in the nucleus. Maternal factor that plays a role in epigenetic chromatin reprogramming during early development of the zygote. Involved in the regulation of gametic DNA demethylation by inducing the conversion of the modified genomic base 5-methylcytosine (5mC) into 5-hydroxymethylcytosine (5hmC). The protein is Protein STPG4 of Homo sapiens (Human).